Reading from the N-terminus, the 615-residue chain is NEDD8 ultimate buster 1 (615 aa).

Coiled-coil stretches lie at residues 36-70 (LALK…AIER) and 152-203 (KAMV…AAET). 3 consecutive UBA domains span residues 374 to 413 (YIDP…HITN), 424 to 470 (EEKE…LLSN), and 489 to 529 (SPSQ…LAHN). Residues 414 to 431 (RREELAQIRKEEKEKKRR) carry the Nuclear localization signal motif. An NEDD8-binding 1 region spans residues 427-474 (EKKRRRLENIRFLKGMGYSTHAAQQVLHAASGNLDEALKILLSNPQMW). Residues 532–586 (SLPPELPLSPEDSLSPPATSPSDSAGTSSASTDEDMETEAVNEILEDIPEHEEDY) are disordered. The segment covering 539–562 (LSPEDSLSPPATSPSDSAGTSSAS) has biased composition (low complexity). The segment at 550 to 598 (TSPSDSAGTSSASTDEDMETEAVNEILEDIPEHEEDYLDSTLEDEEIII) is NEDD8-binding 2. Residues 563 to 586 (TDEDMETEAVNEILEDIPEHEEDY) are compositionally biased toward acidic residues.

As to quaternary structure, directly interacts with NEDD8 and PSMD4/S5a, a member of the regulatory subunit of the 26S proteasome. Isoform 1 binds to NEDD8 more efficiently than isoform 2. Interacts with AIPL1. The interaction with UBD via UBA domains facilitates the linking of UBD-conjugated target protein to the proteasome complex and accelerates UBD degradation and that of its conjugates. In terms of tissue distribution, widely expressed with lowest expression in the pancreas for isoform 1 and in leukocytes, liver, prostate and skeletal muscle for isoform 2.

The protein localises to the nucleus. Specific down-regulator of the NEDD8 conjugation system. Recruits NEDD8, UBD, and their conjugates to the proteasome for degradation. Isoform 1 promotes the degradation of NEDD8 more efficiently than isoform 2. The protein is NEDD8 ultimate buster 1 (NUB1) of Homo sapiens (Human).